A 1396-amino-acid chain; its full sequence is Helicase ARIP4 (1396 aa).

The tract at residues 1–103 (MSDASISGSE…LQKPANLRRN (103 aa)) is disordered. Residues 11-49 (PELDPEDMEEEEEDDEDDDEEEEEEEDEEDNDGDDEDDK) are compositionally biased toward acidic residues. A compositionally biased stretch (polar residues) spans 75-84 (RSTTSGQSGQ). In terms of domain architecture, Helicase ATP-binding spans 290–510 (RFSGSSGFGC…WCMVDFVRPD (221 aa)). 303–310 (HSMGLGKT) serves as a coordination point for ATP. The DEAH box motif lies at 461–464 (DEGH). An LXXLL motif 1 motif is present at residues 549 to 553 (LHSLL). Residues 717-891 (KMVLLFHLIE…RVVDDLNPEV (175 aa)) form the Helicase C-terminal domain. Disordered stretches follow at residues 1117–1168 (SGKQ…PDSP) and 1194–1250 (NLGL…STMN). Polar residues-rich tracts occupy residues 1128 to 1148 (QATS…RHST) and 1218 to 1238 (DQSS…SYPN). The LXXLL motif 2 motif lies at 1273-1277 (LPSLL). The tract at residues 1340 to 1396 (GLPTNNPASTFPGYLSSHSNYQASPGTSSRPLPSGETELGSCEEDGRDDDVVEVTGE) is disordered. A compositionally biased stretch (polar residues) spans 1355–1370 (SSHSNYQASPGTSSRP). Over residues 1380-1396 (SCEEDGRDDDVVEVTGE) the composition is skewed to acidic residues.

This sequence belongs to the SNF2/RAD54 helicase family.

The protein resides in the nucleus. The catalysed reaction is ATP + H2O = ADP + phosphate + H(+). Functionally, DNA helicase that modulates androgen receptor (AR)-dependent transactivation in a promoter-dependent manner. The chain is Helicase ARIP4 (rad54l2) from Xenopus tropicalis (Western clawed frog).